The following is a 181-amino-acid chain: ATP synthase subunit b (181 aa).

A helical transmembrane segment spans residues Phe23–Leu43.

Belongs to the ATPase B chain family. As to quaternary structure, F-type ATPases have 2 components, F(1) - the catalytic core - and F(0) - the membrane proton channel. F(1) has five subunits: alpha(3), beta(3), gamma(1), delta(1), epsilon(1). F(0) has three main subunits: a(1), b(2) and c(10-14). The alpha and beta chains form an alternating ring which encloses part of the gamma chain. F(1) is attached to F(0) by a central stalk formed by the gamma and epsilon chains, while a peripheral stalk is formed by the delta and b chains.

The protein resides in the cell membrane. Functionally, f(1)F(0) ATP synthase produces ATP from ADP in the presence of a proton or sodium gradient. F-type ATPases consist of two structural domains, F(1) containing the extramembraneous catalytic core and F(0) containing the membrane proton channel, linked together by a central stalk and a peripheral stalk. During catalysis, ATP synthesis in the catalytic domain of F(1) is coupled via a rotary mechanism of the central stalk subunits to proton translocation. Its function is as follows. Component of the F(0) channel, it forms part of the peripheral stalk, linking F(1) to F(0). This chain is ATP synthase subunit b, found in Acetivibrio thermocellus (strain ATCC 27405 / DSM 1237 / JCM 9322 / NBRC 103400 / NCIMB 10682 / NRRL B-4536 / VPI 7372) (Clostridium thermocellum).